The following is a 221-amino-acid chain: Protein-L-isoaspartate O-methyltransferase (221 aa).

Ser64 is an active-site residue.

Belongs to the methyltransferase superfamily. L-isoaspartyl/D-aspartyl protein methyltransferase family.

It is found in the cytoplasm. It catalyses the reaction [protein]-L-isoaspartate + S-adenosyl-L-methionine = [protein]-L-isoaspartate alpha-methyl ester + S-adenosyl-L-homocysteine. Its function is as follows. Catalyzes the methyl esterification of L-isoaspartyl residues in peptides and proteins that result from spontaneous decomposition of normal L-aspartyl and L-asparaginyl residues. It plays a role in the repair and/or degradation of damaged proteins. The sequence is that of Protein-L-isoaspartate O-methyltransferase from Thermococcus sibiricus (strain DSM 12597 / MM 739).